Consider the following 107-residue polypeptide: Thioredoxin (107 aa).

A Thioredoxin domain is found at 2-107 (SVEAVVKQVD…GIRELIQANA (106 aa)). Active-site nucleophile residues include C34 and C37. C34 and C37 are disulfide-bonded.

The protein belongs to the thioredoxin family.

Its function is as follows. Participates in various redox reactions through the reversible oxidation of its active center dithiol to a disulfide and catalyzes dithiol-disulfide exchange reactions. The chain is Thioredoxin (TRX) from Echinococcus granulosus (Hydatid tapeworm).